The primary structure comprises 514 residues: Histidine ammonia-lyase (514 aa).

A cross-link (5-imidazolinone (Ala-Gly)) is located at residues 146–148 (ASG). The residue at position 147 (Ser-147) is a 2,3-didehydroalanine (Ser).

It belongs to the PAL/histidase family. In terms of processing, contains an active site 4-methylidene-imidazol-5-one (MIO), which is formed autocatalytically by cyclization and dehydration of residues Ala-Ser-Gly.

The protein localises to the cytoplasm. The enzyme catalyses L-histidine = trans-urocanate + NH4(+). It participates in amino-acid degradation; L-histidine degradation into L-glutamate; N-formimidoyl-L-glutamate from L-histidine: step 1/3. The protein is Histidine ammonia-lyase of Clostridium tetani (strain Massachusetts / E88).